Reading from the N-terminus, the 493-residue chain is MERSTPTGLLQQPKPFFMIFFVELWERFGYYGVQGILAVFFVQQLGFSQEQAFVTFGAFAALVYGLISIGGYVGDHLLGTKRTMVLGAVVLAAGYFATGLSLYQPNLIFFALGTIAVGNGLFKANPASLLSKCYPPKDPRLDGAFTLFYMSINIGSLLSLSLAPVIAERFGYTVTYYLCGIGLIFALLVYFCCRHMVRHIGSEPDTKPLNWRNLLLVLLGSAVMICVCAWLMNHVFIANLVLIALSLIVVFIFFREASKQDRLGRNKMFVAFILMIEAIVFYVLYAQMPTSLNFFAINNVHHEILGFSINPVSFQALNPFWVVVASPILASIYTRLGSQNRDLSMPAKFTLGMFLCSLGFLTAAAAGMWFADAQGLTSPWFIVLVYLFQSLGELMISALGLAMVAALVPQYLMGFILGMWFLTQAASFLIGGYVATFTATPEGMTDPLETLPIYTDVFGKIGMVTLVIALVMALLIPWLNRMINSSAAEDAVA.

Residues 1–27 (MERSTPTGLLQQPKPFFMIFFVELWER) are Cytoplasmic-facing. The chain crosses the membrane as a helical span at residues 28-48 (FGYYGVQGILAVFFVQQLGFS). Residues 49-52 (QEQA) are Periplasmic-facing. Residues 53–73 (FVTFGAFAALVYGLISIGGYV) form a helical membrane-spanning segment. The Cytoplasmic portion of the chain corresponds to 74 to 82 (GDHLLGTKR). The chain crosses the membrane as a helical span at residues 83–103 (TMVLGAVVLAAGYFATGLSLY). The Periplasmic segment spans residues 104–106 (QPN). The helical transmembrane segment at 107-127 (LIFFALGTIAVGNGLFKANPA) threads the bilayer. Topologically, residues 128 to 146 (SLLSKCYPPKDPRLDGAFT) are cytoplasmic. Residues 147 to 167 (LFYMSINIGSLLSLSLAPVIA) form a helical membrane-spanning segment. The Periplasmic portion of the chain corresponds to 168-169 (ER). The chain crosses the membrane as a helical span at residues 170-190 (FGYTVTYYLCGIGLIFALLVY). Residues 191–212 (FCCRHMVRHIGSEPDTKPLNWR) lie on the Cytoplasmic side of the membrane. Transmembrane regions (helical) follow at residues 213–233 (NLLLVLLGSAVMICVCAWLMN) and 234–254 (HVFIANLVLIALSLIVVFIFF). Over 255-267 (REASKQDRLGRNK) the chain is Cytoplasmic. The helical transmembrane segment at 268-288 (MFVAFILMIEAIVFYVLYAQM) threads the bilayer. At 289 to 311 (PTSLNFFAINNVHHEILGFSINP) the chain is on the periplasmic side. Residues 312–332 (VSFQALNPFWVVVASPILASI) traverse the membrane as a helical segment. Over 333–350 (YTRLGSQNRDLSMPAKFT) the chain is Cytoplasmic. A helical transmembrane segment spans residues 351–371 (LGMFLCSLGFLTAAAAGMWFA). The Periplasmic segment spans residues 372 to 379 (DAQGLTSP). A helical transmembrane segment spans residues 380–400 (WFIVLVYLFQSLGELMISALG). Topologically, residues 401-424 (LAMVAALVPQYLMGFILGMWFLTQ) are cytoplasmic. The chain crosses the membrane as a helical span at residues 425–445 (AASFLIGGYVATFTATPEGMT). Residues 446 to 456 (DPLETLPIYTD) lie on the Periplasmic side of the membrane. The helical transmembrane segment at 457 to 477 (VFGKIGMVTLVIALVMALLIP) threads the bilayer. At 478–493 (WLNRMINSSAAEDAVA) the chain is on the cytoplasmic side.

The protein belongs to the major facilitator superfamily. Proton-dependent oligopeptide transporter (POT/PTR) (TC 2.A.17) family. DtpB subfamily.

It localises to the cell inner membrane. In terms of biological role, proton-dependent permease that transports di- and tripeptides. This chain is Dipeptide and tripeptide permease B, found in Yersinia enterocolitica serotype O:8 / biotype 1B (strain NCTC 13174 / 8081).